A 542-amino-acid chain; its full sequence is MAACTSSLVSLLLLLLLLLLLLVAGEATAEAALNFTRQDFPGGLRRRHICLPGFRDADSITFPRDIESLTCGTHMCLDPRGSHTSVTQCHGECHRRNVIESQSRFRRTYEGATGEDGRTPSIWDTFTHSGRMADNSTGDRAAAGYHKYKEDVKLMSDTGLEAYRFSISWSRLIPRGRGPINPKGLEYYNDLIDKLVKRGEICDCSMGIEIHVTLYHLDFPQALQDEYNGWLSPRIIEDFTAYADVCFREFGDLVRHWTTVGEPNVLSIAGYDSGVIPPCRCSPPFGTSCAAGDSTVEPYFAAHNSILAHASAVRLYWDKYQAKQKGVVGTNIYSFWPYPLSRSCADIDAVQRVLDFTIGWILDPLVYGDYPEIMKKQAGSRIPSFTKEQSELIRGSADFIGINHYKSLYVSDGSNREKAGLRDYNADMAAHFRGFGQFDKEDSLNDTERVEYLSSYMGGTLAALRNGANVKGYFVWSFLDVFELFAGYHSPFGLHHVDFEDPSLPRQPKLSAQWYSKFLRSEIGINIEKMVSPDEHEHAYYQ.

An N-terminal signal peptide occupies residues 1-29; the sequence is MAACTSSLVSLLLLLLLLLLLLVAGEATA. N-linked (GlcNAc...) asparagine glycosylation is present at Asn34. A beta-D-glucoside is bound at residue Gln88. Asn135 is a glycosylation site (N-linked (GlcNAc...) asparagine). His216 lines the a beta-D-glucoside pocket. Glu262 acts as the Proton donor in catalysis. A disulfide bridge connects residues Cys281 and Cys289. Residue Tyr405 participates in a beta-D-glucoside binding. Residue Asn445 is glycosylated (N-linked (GlcNAc...) asparagine). A beta-D-glucoside contacts are provided by Trp476 and Phe492.

It belongs to the glycosyl hydrolase 1 family.

The enzyme catalyses Hydrolysis of terminal, non-reducing beta-D-glucosyl residues with release of beta-D-glucose.. This is Putative beta-glucosidase 23 (BGLU23) from Oryza sativa subsp. japonica (Rice).